The following is a 564-amino-acid chain: Dihydropyrimidinase-related protein 5 (564 aa).

2 positions are modified to phosphothreonine: Thr-509 and Thr-514. A phosphoserine mark is found at Ser-532 and Ser-538. At Arg-559 the chain carries Omega-N-methylarginine.

This sequence belongs to the metallo-dependent hydrolases superfamily. Hydantoinase/dihydropyrimidinase family. Homotetramer, and heterotetramer with other DPYS-like proteins. Interacts with DPYSL2, DPYSL3 and DPYSL4. Interacts with MAP2 and TUBB3.

The protein resides in the cytoplasm. Functionally, involved in the negative regulation of dendrite outgrowth. This chain is Dihydropyrimidinase-related protein 5 (DPYSL5), found in Homo sapiens (Human).